We begin with the raw amino-acid sequence, 117 residues long: Basic phospholipase A2 pseudexin A chain (117 aa).

Cystine bridges form between Cys-11–Cys-71, Cys-27–Cys-117, Cys-29–Cys-45, Cys-44–Cys-98, Cys-51–Cys-91, Cys-60–Cys-84, and Cys-78–Cys-89. Tyr-28, Gly-30, and Gly-32 together coordinate Ca(2+). Residue His-48 is part of the active site. Ca(2+) is bound at residue Asp-49. Asp-92 is a catalytic residue.

It belongs to the phospholipase A2 family. Group I subfamily. D49 sub-subfamily. It depends on Ca(2+) as a cofactor. In terms of tissue distribution, expressed by the venom gland.

Its subcellular location is the secreted. It catalyses the reaction a 1,2-diacyl-sn-glycero-3-phosphocholine + H2O = a 1-acyl-sn-glycero-3-phosphocholine + a fatty acid + H(+). PLA2 catalyzes the calcium-dependent hydrolysis of the 2-acyl groups in 3-sn-phosphoglycerides. The protein is Basic phospholipase A2 pseudexin A chain of Pseudechis porphyriacus (Red-bellied black snake).